Consider the following 167-residue polypeptide: uncharacterized protein (167 aa).

2 consecutive transmembrane segments (helical) span residues 96–115 and 119–138; these read YVPAFIPLFAAYLTMFFNFY and WGALSFAAGTIAAIVWIIAV.

It localises to the cell membrane. This is an uncharacterized protein from Bacillus subtilis (strain 168).